A 304-amino-acid polypeptide reads, in one-letter code: Ornithine carbamoyltransferase (304 aa).

Carbamoyl phosphate is bound by residues 53–56 (STRT), glutamine 80, arginine 104, and 131–134 (HPCQ). Residues asparagine 162, aspartate 219, and 223–224 (SM) contribute to the L-ornithine site. Carbamoyl phosphate contacts are provided by residues 259 to 260 (CL) and arginine 287.

It belongs to the aspartate/ornithine carbamoyltransferase superfamily. OTCase family.

Its subcellular location is the cytoplasm. It catalyses the reaction carbamoyl phosphate + L-ornithine = L-citrulline + phosphate + H(+). It participates in amino-acid biosynthesis; L-arginine biosynthesis; L-arginine from L-ornithine and carbamoyl phosphate: step 1/3. Reversibly catalyzes the transfer of the carbamoyl group from carbamoyl phosphate (CP) to the N(epsilon) atom of ornithine (ORN) to produce L-citrulline. This is Ornithine carbamoyltransferase from Nitrosococcus oceani (strain ATCC 19707 / BCRC 17464 / JCM 30415 / NCIMB 11848 / C-107).